The primary structure comprises 429 residues: uncharacterized protein (429 aa).

The next 10 membrane-spanning stretches (helical) occupy residues 26-46, 51-71, 99-119, 135-155, 173-193, 223-243, 278-298, 311-331, 361-381, and 407-427; these read VALTGAAAVVVLPVITSHDIF, TGIDWDVIFLLVGMMIIVGVL, LVLVSALASALLDNVTTVLLI, TSFLMAEVFASNIGGAATLVG, FMLHLTPLVVIVLIALIAVLP, LLVKCGAVLVLVFAAFVAHPV, TLLFFAGLFIMVGALVKTGVV, GNIVATAFLILGVSAPISGII, WWALALGADFGGNLTAIGASA, and VVTAVSIALAAIYLWLRYFVL.

The protein belongs to the CitM (TC 2.A.11) transporter family.

It localises to the cell membrane. This is an uncharacterized protein from Mycobacterium tuberculosis (strain ATCC 25618 / H37Rv).